We begin with the raw amino-acid sequence, 259 residues long: 3-methyl-2-oxobutanoate hydroxymethyltransferase (259 aa).

Mg(2+)-binding residues include Asp44 and Asp83. Residues 44–45 (DS), Asp83, and Lys113 each bind 3-methyl-2-oxobutanoate. Glu115 is a binding site for Mg(2+). Glu183 acts as the Proton acceptor in catalysis.

This sequence belongs to the PanB family. Homodecamer; pentamer of dimers. Mg(2+) is required as a cofactor.

It is found in the cytoplasm. It catalyses the reaction 3-methyl-2-oxobutanoate + (6R)-5,10-methylene-5,6,7,8-tetrahydrofolate + H2O = 2-dehydropantoate + (6S)-5,6,7,8-tetrahydrofolate. It participates in cofactor biosynthesis; (R)-pantothenate biosynthesis; (R)-pantoate from 3-methyl-2-oxobutanoate: step 1/2. Catalyzes the reversible reaction in which hydroxymethyl group from 5,10-methylenetetrahydrofolate is transferred onto alpha-ketoisovalerate to form ketopantoate. This chain is 3-methyl-2-oxobutanoate hydroxymethyltransferase, found in Acaryochloris marina (strain MBIC 11017).